A 175-amino-acid polypeptide reads, in one-letter code: MTLLYQVGLLLLVAATYKVSAECCTPGATSDFCTVFSMLSTMEQNEVMNFIGENCDGDAEVALQKMEKRKPNFMRYGRSAAVKSLGKKAGSDPNFLRFGRSQPNFLRFGKASGDPNFLRFGRSDPNFLRFGKAAADPNFLRFGKRSADPNFLRFGRSFDNFDRESRKPNFLRFGK.

Residues 1 to 21 form the signal peptide; that stretch reads MTLLYQVGLLLLVAATYKVSA. Positions 22 to 68 are excised as a propeptide; that stretch reads ECCTPGATSDFCTVFSMLSTMEQNEVMNFIGENCDGDAEVALQKMEK. At Tyr-76 the chain carries Tyrosine amide. The propeptide occupies 79–86; the sequence is SAAVKSLG. Phe-98, Phe-108, Phe-120, Phe-130, Phe-142, and Phe-154 each carry phenylalanine amide. Positions 157 to 165 are excised as a propeptide; the sequence is SFDNFDRES. Phenylalanine amide is present on Phe-173.

It belongs to the FARP (FMRFamide related peptide) family. In terms of processing, may be processed by convertase egl-3. As to expression, each flp gene is expressed in a distinct set of neurons. Flp-1 is expressed in the AVA interneurons, the M5 cholinergic pharyngeal motoneurons, and the AIA, AIY, AVE, AVK, RIG and RMG neurons.

Its subcellular location is the secreted. Together with flp-18, plays a homeostatic role by acting on the GABAergic neural transmission at neuromuscular junctions to prevent overexcitation of the locomotor circuit. In terms of biological role, inhibits the activity of dissected pharyngeal myogenic muscle system. Its function is as follows. DPNFLRF-amide: Inhibits the activity of dissected pharyngeal myogenic muscle system. Functionally, acts as a ligand for the npr-22 receptor in vitro. This chain is FMRFamide-like neuropeptides 1 (flp-1), found in Caenorhabditis elegans.